A 226-amino-acid chain; its full sequence is MFLLNASRLGAGSRLFSSAGVQFAKKRGQAAKEAVEVDLVDVGDYVKKATERFQHTVELHKKRLGQMKAGKPDATMFDGLAVGNEKQKFTELAATSVKGKNMLIVTVFDPKDTKRVASAIVGAGLNVTTERVLENQQQLKISLPPVTTETRERLCRDMKKVFEEYKNSANRHSLGHVRSEVLKELKKLDKKNDSVRKVIQEIENLHKEYTAMLQEQLKHAEKNAMR.

Belongs to the RRF family.

It localises to the mitochondrion. In terms of biological role, necessary for protein synthesis in mitochondria. Functions as a ribosome recycling factor in mitochondria. The protein is Ribosome-recycling factor, mitochondrial (RRF1) of Eremothecium gossypii (strain ATCC 10895 / CBS 109.51 / FGSC 9923 / NRRL Y-1056) (Yeast).